The chain runs to 592 residues: Inactive metallocarboxypeptidase ECM14 (592 aa).

Positions 1–21 (MRQFTHGTLLAILALANTISA) are cleaved as a signal peptide. A propeptide spanning residues 22-174 (IPSFSANNYP…QTVYESYPSS (153 aa)) is cleaved from the precursor. Over residues 170–179 (SYPSSSQRPT) the composition is skewed to polar residues. The segment at 170–191 (SYPSSSQRPTDNGRGFLPSRES) is disordered. The 320-residue stretch at 202-521 (DYQPLSVIGP…NAVMVLGKFL (320 aa)) folds into the Peptidase M14 domain. Zn(2+)-binding residues include H264 and E267. Residues 264–267 (HARE), R322, and 339–340 (DR) each bind substrate. Cysteines 333 and 356 form a disulfide. N349 carries N-linked (GlcNAc...) asparagine glycosylation. H396 lines the Zn(2+) pocket. Residue 397–398 (SY) coordinates substrate. A disordered region spans residues 542–592 (ADKPILDDGDDDEEEDGQDKNDDSWIPDEYKNDNDHDDDDDGWGLRRRRKR). A compositionally biased stretch (acidic residues) spans 548–558 (DDGDDDEEEDG). The span at 559-575 (QDKNDDSWIPDEYKNDN) shows a compositional bias: basic and acidic residues.

The protein belongs to the peptidase M14 family. Zn(2+) serves as cofactor.

The protein localises to the vacuole. It is found in the secreted. Its function is as follows. Inactive carboxypeptidase that may play a role in cell wall organization and biogenesis. The chain is Inactive metallocarboxypeptidase ECM14 (ECM14) from Blastomyces gilchristii (strain SLH14081) (Blastomyces dermatitidis).